The following is a 283-amino-acid chain: Elongation factor Ts (283 aa).

Residues 80-83 (TDFV) are involved in Mg(2+) ion dislocation from EF-Tu.

Belongs to the EF-Ts family.

It is found in the cytoplasm. Its function is as follows. Associates with the EF-Tu.GDP complex and induces the exchange of GDP to GTP. It remains bound to the aminoacyl-tRNA.EF-Tu.GTP complex up to the GTP hydrolysis stage on the ribosome. In Serratia proteamaculans (strain 568), this protein is Elongation factor Ts.